A 3214-amino-acid polypeptide reads, in one-letter code: Ciliogenesis and planar polarity effector 1 (3214 aa).

The next 2 helical transmembrane spans lie at 593–613 (KLML…LQFI) and 632–652 (AWVL…YWDM). 11 disordered regions span residues 1496-1523 (VGKK…ETPG), 1644-1667 (GNQS…PLQS), 1879-1991 (DGRH…HRAQ), 2047-2142 (FGES…FPPA), 2214-2241 (SLSD…SSHC), 2398-2440 (GITQ…ISND), 2491-2529 (GSHD…GHEP), 2622-2650 (TFQS…QSGE), 2824-2855 (VSLQ…HSSQ), 3037-3127 (TAPA…CRED), and 3158-3181 (MSPA…VSES). The segment covering 1512–1523 (NSQRKEDDETPG) has biased composition (basic and acidic residues). Basic and acidic residues predominate over residues 1932–1942 (QCSRKEPRDAS). 3 stretches are compositionally biased toward polar residues: residues 1943 to 1953 (VDTNLTEQKGA), 1971 to 1984 (NGAQ…QKTQ), and 2047 to 2068 (FGES…SRQR). A compositionally biased stretch (basic and acidic residues) spans 2079 to 2099 (CTREPGKNSPADHKRISRPDQ). The segment covering 2215-2241 (LSDSCQPPVSQRTVHTTLPSPSDSSHC) has biased composition (polar residues). A compositionally biased stretch (basic and acidic residues) spans 2500-2514 (DPDKEGPSQKADSES). Composition is skewed to polar residues over residues 2515 to 2524 (SKNPQATAAS) and 2622 to 2634 (TFQS…STRG). Residues 2830 to 2848 (EDVEEQKDAEETSETEFSE) are compositionally biased toward acidic residues. Residues 3090–3107 (RGSSQLRGSQPPCQSQKP) show a composition bias toward polar residues.

As to quaternary structure, interacts with FUZ; INTU and WDPCP; the interactors are proposed to form the core CPLANE (ciliogenesis and planar polarity effectors) complex.

The protein localises to the membrane. It localises to the cell projection. It is found in the cilium. Its function is as follows. Involved in ciliogenesis. Involved in the establishment of cell polarity required for directional cell migration. Proposed to act in association with the CPLANE (ciliogenesis and planar polarity effectors) complex. Involved in recruitment of peripheral IFT-A proteins to basal bodies. The sequence is that of Ciliogenesis and planar polarity effector 1 from Mus musculus (Mouse).